We begin with the raw amino-acid sequence, 153 residues long: Hsp90 co-chaperone HCH1 (153 aa).

It belongs to the AHA1 family. In terms of assembly, monomer. Interacts with HSP82.

The protein resides in the cytoplasm. Its subcellular location is the nucleus. Functionally, co-chaperone that binds to the molecular chaperone HSP82 and stimulates its ATPase activity. Although not essential, it confers thermotolerance when intracellular levels of HSP82 are limiting. This chain is Hsp90 co-chaperone HCH1 (HCH1), found in Saccharomyces cerevisiae (strain ATCC 204508 / S288c) (Baker's yeast).